We begin with the raw amino-acid sequence, 244 residues long: Flavin-dependent thymidylate synthase (244 aa).

The ThyX domain maps to 7 to 199 (PRVFLIASWG…PNLARLVWED (193 aa)). FAD-binding positions include S60 and 83-85 (RHR). DUMP-binding positions include 80 to 83 (QFIR), 93 to 95 (SQR), and R137. Positions 83–93 (RHRMASYWSES) match the ThyX motif motif. FAD contacts are provided by residues 153-155 (NAR) and N160. R165 serves as a coordination point for dUMP. Residue R165 is the Involved in ionization of N3 of dUMP, leading to its activation of the active site.

It belongs to the thymidylate synthase ThyX family. Homotetramer. The cofactor is FAD.

It carries out the reaction dUMP + (6R)-5,10-methylene-5,6,7,8-tetrahydrofolate + NADPH + H(+) = dTMP + (6S)-5,6,7,8-tetrahydrofolate + NADP(+). It functions in the pathway pyrimidine metabolism; dTTP biosynthesis. Catalyzes the reductive methylation of 2'-deoxyuridine-5'-monophosphate (dUMP) to 2'-deoxythymidine-5'-monophosphate (dTMP) while utilizing 5,10-methylenetetrahydrofolate (mTHF) as the methyl donor, and NADPH and FADH(2) as the reductant. This chain is Flavin-dependent thymidylate synthase, found in Pyrobaculum aerophilum (strain ATCC 51768 / DSM 7523 / JCM 9630 / CIP 104966 / NBRC 100827 / IM2).